A 337-amino-acid polypeptide reads, in one-letter code: tRNA N6-adenosine threonylcarbamoyltransferase (337 aa).

Fe cation is bound by residues His111 and His115. Residues 134-138 (LVSGG), Asp167, Gly180, and Asn272 each bind substrate. Position 300 (Asp300) interacts with Fe cation.

Belongs to the KAE1 / TsaD family. Fe(2+) serves as cofactor.

The protein localises to the cytoplasm. It catalyses the reaction L-threonylcarbamoyladenylate + adenosine(37) in tRNA = N(6)-L-threonylcarbamoyladenosine(37) in tRNA + AMP + H(+). Functionally, required for the formation of a threonylcarbamoyl group on adenosine at position 37 (t(6)A37) in tRNAs that read codons beginning with adenine. Is involved in the transfer of the threonylcarbamoyl moiety of threonylcarbamoyl-AMP (TC-AMP) to the N6 group of A37, together with TsaE and TsaB. TsaD likely plays a direct catalytic role in this reaction. The protein is tRNA N6-adenosine threonylcarbamoyltransferase of Photorhabdus laumondii subsp. laumondii (strain DSM 15139 / CIP 105565 / TT01) (Photorhabdus luminescens subsp. laumondii).